We begin with the raw amino-acid sequence, 321 residues long: uncharacterized protein (321 aa).

The Extracellular portion of the chain corresponds to M1–K6. The chain crosses the membrane as a helical span at residues I7 to F29. Over P30–T34 the chain is Cytoplasmic. The helical transmembrane segment at W35 to A57 threads the bilayer. Residues D58–Q69 are Extracellular-facing. The helical transmembrane segment at V70 to L92 threads the bilayer. Residues H93–E97 are Cytoplasmic-facing. Residues I98–L120 traverse the membrane as a helical segment. The Extracellular segment spans residues A121–V129. A helical membrane pass occupies residues A130–F150. Residues A151 to P159 lie on the Cytoplasmic side of the membrane. A helical transmembrane segment spans residues G160–V180. At K181 to K190 the chain is on the extracellular side. The helical transmembrane segment at A191–V211 threads the bilayer. The Cytoplasmic segment spans residues S212 to S221. The chain crosses the membrane as a helical span at residues G222–L242. Residues C243–G267 lie on the Extracellular side of the membrane. Residues L268–F288 traverse the membrane as a helical segment. Residues S289–L321 lie on the Cytoplasmic side of the membrane.

The protein belongs to the bile acid:sodium symporter (BASS) (TC 2.A.28) family.

The protein localises to the cell membrane. This is an uncharacterized protein from Bacillus subtilis (strain 168).